The chain runs to 929 residues: Protocadherin gamma-B7 (929 aa).

The first 30 residues, 1–30 (MGGSCAQRRRAGPRQVLFPLLLPLFYPTLC), serve as a signal peptide directing secretion. Cadherin domains follow at residues 31 to 133 (EPIR…APQF), 134 to 242 (RKDE…PPVF), 243 to 347 (SQDV…SPEI), 348 to 452 (IITS…APVF), 453 to 562 (GQSA…APRV), and 570 to 675 (DGSA…LPDF). The Extracellular segment spans residues 31 to 691 (EPIRYSIPEE…SDSQAEMQFY (661 aa)). 2 N-linked (GlcNAc...) asparagine glycosylation sites follow: Asn419 and Asn545. A helical membrane pass occupies residues 692–712 (LVVALALISVLFLLAVILAIA). Residues 713-929 (LRLRQSFSPT…KKKSGKKEKK (217 aa)) lie on the Cytoplasmic side of the membrane. 2 disordered regions span residues 806–838 (QAPPNTDWRFSQAQRPGTSGSQNGDDTGTWPNN) and 899–929 (ATLTNAAGKRDGKAPAGGNGNKKKSGKKEKK). Residues 807-838 (APPNTDWRFSQAQRPGTSGSQNGDDTGTWPNN) are compositionally biased toward polar residues. Residues 919-929 (NKKKSGKKEKK) are compositionally biased toward basic residues.

Its subcellular location is the cell membrane. Functionally, potential calcium-dependent cell-adhesion protein. May be involved in the establishment and maintenance of specific neuronal connections in the brain. In Homo sapiens (Human), this protein is Protocadherin gamma-B7 (PCDHGB7).